The chain runs to 309 residues: Methionyl-tRNA formyltransferase (309 aa).

(6S)-5,6,7,8-tetrahydrofolate is bound at residue 112–115; the sequence is SLLP.

This sequence belongs to the Fmt family.

It carries out the reaction L-methionyl-tRNA(fMet) + (6R)-10-formyltetrahydrofolate = N-formyl-L-methionyl-tRNA(fMet) + (6S)-5,6,7,8-tetrahydrofolate + H(+). Its function is as follows. Attaches a formyl group to the free amino group of methionyl-tRNA(fMet). The formyl group appears to play a dual role in the initiator identity of N-formylmethionyl-tRNA by promoting its recognition by IF2 and preventing the misappropriation of this tRNA by the elongation apparatus. This Bartonella quintana (strain Toulouse) (Rochalimaea quintana) protein is Methionyl-tRNA formyltransferase.